We begin with the raw amino-acid sequence, 865 residues long: LINE-1 type transposase domain-containing protein 1 (865 aa).

An N-acetylserine modification is found at Ser-2. Ser-2 is modified (phosphoserine). Thr-149 carries the phosphothreonine modification. At Ser-154 the chain carries Phosphoserine. A disordered region spans residues 370 to 508 (EMKNLETQEE…EKKASRRQKE (139 aa)). 2 stretches are compositionally biased toward acidic residues: residues 376–440 (TQEE…EQTS) and 472–483 (SVEDSESEEEEE). Residues Ser-472, Ser-476, and Ser-478 each carry the phosphoserine modification. Residues 498 to 508 (TEKKASRRQKE) show a composition bias toward basic and acidic residues. A phosphoserine mark is found at Ser-518, Ser-561, and Ser-573. Positions 590-608 (EEKKHRTLHTEELTSKEAD) are enriched in basic and acidic residues. A disordered region spans residues 590-612 (EEKKHRTLHTEELTSKEADLTEE). Residues Ser-640, Ser-648, and Ser-665 each carry the phosphoserine modification. A coiled-coil region spans residues 642 to 684 (VLEIENSVDDLSSRMDILEERIDSLEDQIEEFSKDTMQMTKQI).

The protein belongs to the transposase 22 family.

This is LINE-1 type transposase domain-containing protein 1 (L1TD1) from Homo sapiens (Human).